A 186-amino-acid chain; its full sequence is Transcription factor FapR (186 aa).

It belongs to the FapR family.

In terms of biological role, transcriptional factor involved in regulation of membrane lipid biosynthesis by repressing genes involved in fatty acid and phospholipid metabolism. The sequence is that of Transcription factor FapR from Staphylococcus epidermidis (strain ATCC 35984 / DSM 28319 / BCRC 17069 / CCUG 31568 / BM 3577 / RP62A).